Consider the following 156-residue polypeptide: Cyclic pyranopterin monophosphate synthase (156 aa).

Residues 75-77 (LCH) and 111-112 (ME) each bind substrate. D126 is an active-site residue.

Belongs to the MoaC family. As to quaternary structure, homohexamer; trimer of dimers.

The catalysed reaction is (8S)-3',8-cyclo-7,8-dihydroguanosine 5'-triphosphate = cyclic pyranopterin phosphate + diphosphate. It participates in cofactor biosynthesis; molybdopterin biosynthesis. Catalyzes the conversion of (8S)-3',8-cyclo-7,8-dihydroguanosine 5'-triphosphate to cyclic pyranopterin monophosphate (cPMP). The polypeptide is Cyclic pyranopterin monophosphate synthase (Caulobacter sp. (strain K31)).